A 475-amino-acid polypeptide reads, in one-letter code: Aspartyl/glutamyl-tRNA(Asn/Gln) amidotransferase subunit B (475 aa).

This sequence belongs to the GatB/GatE family. GatB subfamily. As to quaternary structure, heterotrimer of A, B and C subunits.

The catalysed reaction is L-glutamyl-tRNA(Gln) + L-glutamine + ATP + H2O = L-glutaminyl-tRNA(Gln) + L-glutamate + ADP + phosphate + H(+). The enzyme catalyses L-aspartyl-tRNA(Asn) + L-glutamine + ATP + H2O = L-asparaginyl-tRNA(Asn) + L-glutamate + ADP + phosphate + 2 H(+). Allows the formation of correctly charged Asn-tRNA(Asn) or Gln-tRNA(Gln) through the transamidation of misacylated Asp-tRNA(Asn) or Glu-tRNA(Gln) in organisms which lack either or both of asparaginyl-tRNA or glutaminyl-tRNA synthetases. The reaction takes place in the presence of glutamine and ATP through an activated phospho-Asp-tRNA(Asn) or phospho-Glu-tRNA(Gln). This chain is Aspartyl/glutamyl-tRNA(Asn/Gln) amidotransferase subunit B, found in Bacillus cereus (strain B4264).